The following is a 314-amino-acid chain: Methionyl-tRNA formyltransferase (314 aa).

113 to 116 contributes to the (6S)-5,6,7,8-tetrahydrofolate binding site; the sequence is SLLP.

This sequence belongs to the Fmt family.

The enzyme catalyses L-methionyl-tRNA(fMet) + (6R)-10-formyltetrahydrofolate = N-formyl-L-methionyl-tRNA(fMet) + (6S)-5,6,7,8-tetrahydrofolate + H(+). Functionally, attaches a formyl group to the free amino group of methionyl-tRNA(fMet). The formyl group appears to play a dual role in the initiator identity of N-formylmethionyl-tRNA by promoting its recognition by IF2 and preventing the misappropriation of this tRNA by the elongation apparatus. The sequence is that of Methionyl-tRNA formyltransferase from Serratia proteamaculans (strain 568).